We begin with the raw amino-acid sequence, 1241 residues long: DNA-directed RNA polymerase subunit beta (1241 aa).

The segment at 1195–1219 (PQDVQENVSGENVDAGYENEDVDID) is disordered.

It belongs to the RNA polymerase beta chain family. As to quaternary structure, the RNAP catalytic core consists of 2 alpha, 1 beta, 1 beta' and 1 omega subunit. When a sigma factor is associated with the core the holoenzyme is formed, which can initiate transcription.

It carries out the reaction RNA(n) + a ribonucleoside 5'-triphosphate = RNA(n+1) + diphosphate. Functionally, DNA-dependent RNA polymerase catalyzes the transcription of DNA into RNA using the four ribonucleoside triphosphates as substrates. In Clostridium acetobutylicum (strain ATCC 824 / DSM 792 / JCM 1419 / IAM 19013 / LMG 5710 / NBRC 13948 / NRRL B-527 / VKM B-1787 / 2291 / W), this protein is DNA-directed RNA polymerase subunit beta.